The sequence spans 487 residues: 2-aminomuconic semialdehyde dehydrogenase (487 aa).

231–236 (GSQPTA) is a binding site for NAD(+). Residue glutamate 253 is the Proton acceptor of the active site. Cysteine 287 serves as the catalytic Nucleophile. A Phosphoserine modification is found at serine 362.

It belongs to the aldehyde dehydrogenase family. Detected in hepatocytes and in proximal and distal convoluted tubules in kidney cortex (at protein level). Highly expressed in adult liver and in kidney cortex. First detected in embryonic liver after 15 days of development.

Its subcellular location is the cytoplasm. It catalyses the reaction 2-aminomuconate 6-semialdehyde + NAD(+) + H2O = (2Z,4E)-2-aminomuconate + NADH + 2 H(+). Its pathway is amino-acid degradation; L-kynurenine degradation. Its function is as follows. Catalyzes the NAD-dependent oxidation of 2-aminomuconic semialdehyde of the kynurenine metabolic pathway in L-tryptophan degradation. The polypeptide is 2-aminomuconic semialdehyde dehydrogenase (Aldh8a1) (Mus musculus (Mouse)).